Consider the following 506-residue polypeptide: Maturase K (506 aa).

This sequence belongs to the intron maturase 2 family. MatK subfamily.

It localises to the plastid. The protein resides in the chloroplast. In terms of biological role, usually encoded in the trnK tRNA gene intron. Probably assists in splicing its own and other chloroplast group II introns. This is Maturase K from Phyllodoce empetriformis (Pink mountainheath).